Consider the following 757-residue polypeptide: Cellulose synthase-like protein B2 (757 aa).

Transmembrane regions (helical) follow at residues 24–44 (AVDL…ILYM) and 48–68 (GIIW…WLLS). Catalysis depends on residues D136 and D461. Helical transmembrane passes span 533 to 555 (AYLC…LPAY), 568 to 588 (LCLG…LWEF), 607 to 627 (IVAT…LLGL), 672 to 692 (FLPG…VFVG), 704 to 724 (GSGL…FPFL), and 735 to 755 (IPLS…VFSV).

The protein belongs to the glycosyltransferase 2 family. Plant cellulose synthase-like B subfamily. Expressed in young seedlings, primarily in the root vascular tissue.

It is found in the golgi apparatus membrane. Functionally, thought to be a Golgi-localized beta-glycan synthase that polymerize the backbones of noncellulosic polysaccharides (hemicelluloses) of plant cell wall. This chain is Cellulose synthase-like protein B2 (CSLB2), found in Arabidopsis thaliana (Mouse-ear cress).